Reading from the N-terminus, the 380-residue chain is Cytochrome b (380 aa).

4 consecutive transmembrane segments (helical) span residues 34–54 (FGSLLAVCFMTQIITGLLLAM), 78–99 (WLIRNLHANGASFFFICIYLHI), 114–134 (WNTGVILLLTLMATAFVGYVL), and 179–199 (FFALHFLLPFVIAGITIIHLT). Positions 84 and 98 each coordinate heme b. Histidine 183 and histidine 197 together coordinate heme b. Position 202 (histidine 202) interacts with a ubiquinone. The next 4 membrane-spanning stretches (helical) occupy residues 227–247 (IKDILGLTLMLTPLLTLALFS), 289–309 (LGGVLALAASVLILLLIPFLH), 321–341 (FSQLLFWLLVANLLILTWVGS), and 348–368 (FIIIGQLASLSYFTTLLILFP).

This sequence belongs to the cytochrome b family. In terms of assembly, the cytochrome bc1 complex contains 11 subunits: 3 respiratory subunits (MT-CYB, CYC1 and UQCRFS1), 2 core proteins (UQCRC1 and UQCRC2) and 6 low-molecular weight proteins (UQCRH/QCR6, UQCRB/QCR7, UQCRQ/QCR8, UQCR10/QCR9, UQCR11/QCR10 and a cleavage product of UQCRFS1). This cytochrome bc1 complex then forms a dimer. Requires heme b as cofactor.

Its subcellular location is the mitochondrion inner membrane. Component of the ubiquinol-cytochrome c reductase complex (complex III or cytochrome b-c1 complex) that is part of the mitochondrial respiratory chain. The b-c1 complex mediates electron transfer from ubiquinol to cytochrome c. Contributes to the generation of a proton gradient across the mitochondrial membrane that is then used for ATP synthesis. This chain is Cytochrome b (MT-CYB), found in Numida meleagris (Helmeted guineafowl).